The primary structure comprises 157 residues: MYGYPVTTVFPPVSIEDFLSLSIGHWISLRSQFKCSSIDDNWHSSERGDIKLALGPSDNSNTRNLAISMGSQYAMKLEFFLDGRLQSENCIIGTWQIWPDGSLELSYHDANGNEQCERIWFMKTNLRLRSTVAFNQDGTLRQASFCSEIRRVTKHKL.

The protein belongs to the CpcS/CpeS biliprotein lyase family.

It is found in the plastid. The protein localises to the organellar chromatophore. In terms of biological role, covalently attaches a chromophore to Cys residue(s) of phycobiliproteins. The sequence is that of Chromophore lyase CpcS/CpeS 1 from Paulinella chromatophora.